The chain runs to 158 residues: Probable cyclic pyranopterin monophosphate synthase (158 aa).

Substrate-binding positions include 75–77 (MCH) and 111–112 (ME). The active site involves Asp-126.

This sequence belongs to the MoaC family. Homohexamer; trimer of dimers.

It catalyses the reaction (8S)-3',8-cyclo-7,8-dihydroguanosine 5'-triphosphate = cyclic pyranopterin phosphate + diphosphate. It functions in the pathway cofactor biosynthesis; molybdopterin biosynthesis. In terms of biological role, catalyzes the conversion of (8S)-3',8-cyclo-7,8-dihydroguanosine 5'-triphosphate to cyclic pyranopterin monophosphate (cPMP). This is Probable cyclic pyranopterin monophosphate synthase from Methanocorpusculum labreanum (strain ATCC 43576 / DSM 4855 / Z).